Reading from the N-terminus, the 463-residue chain is Cytoplasmic 60S subunit biogenesis factor SPCC550.15c (463 aa).

C2H2-type zinc fingers lie at residues 5–30 (FACT…DWHH) and 70–94 (QNCE…SKKH). The tract at residues 109-136 (KLQSEDASSIASSTLSMGEPVVDSEIEE) is disordered. Polar residues predominate over residues 113 to 124 (EDASSIASSTLS). 2 positions are modified to phosphoserine: serine 150 and serine 155. The tract at residues 155 to 189 (SLHGRESEPSKTELATSIPQSNEASKSHLFTQEPT) is disordered. Residues 167-188 (ELATSIPQSNEASKSHLFTQEP) show a composition bias toward polar residues. 2 consecutive C2H2-type zinc fingers follow at residues 208–231 (RDCL…KASH) and 259–283 (FTCL…QKGH). A compositionally biased stretch (acidic residues) spans 317–338 (TVVEEDGSSGEGDWEDVSDDSD). Disordered stretches follow at residues 317–341 (TVVE…DNSS) and 444–463 (ANKM…ALLQ).

The protein belongs to the REI1 family. In terms of assembly, associates with nascent pre-60S particles that have not yet entered the translating pool, and is released from mature 60S subunits.

It is found in the cytoplasm. In terms of biological role, pre-60S-associated factor involved in the cytoplasmic maturation of the 60S subunit. Involved in the dissociation and recycling of other late pre-60S factors before newly synthesized large ribosomal subunits enter translation. This is Cytoplasmic 60S subunit biogenesis factor SPCC550.15c from Schizosaccharomyces pombe (strain 972 / ATCC 24843) (Fission yeast).